The chain runs to 153 residues: UPF0260 protein CKO_01185 (153 aa).

The protein belongs to the UPF0260 family.

This Citrobacter koseri (strain ATCC BAA-895 / CDC 4225-83 / SGSC4696) protein is UPF0260 protein CKO_01185.